A 476-amino-acid polypeptide reads, in one-letter code: Glutamate--tRNA ligase (476 aa).

The 'HIGH' region motif lies at 9 to 19 (PSPTGTLHIGT). Residues 248–252 (KLSKR) carry the 'KMSKS' region motif. Residue Lys251 coordinates ATP.

This sequence belongs to the class-I aminoacyl-tRNA synthetase family. Glutamate--tRNA ligase type 1 subfamily. As to quaternary structure, monomer.

Its subcellular location is the cytoplasm. The enzyme catalyses tRNA(Glu) + L-glutamate + ATP = L-glutamyl-tRNA(Glu) + AMP + diphosphate. In terms of biological role, catalyzes the attachment of glutamate to tRNA(Glu) in a two-step reaction: glutamate is first activated by ATP to form Glu-AMP and then transferred to the acceptor end of tRNA(Glu). This is Glutamate--tRNA ligase from Prochlorococcus marinus (strain MIT 9303).